Reading from the N-terminus, the 638-residue chain is Epithelial sodium channel subunit beta (638 aa).

The Cytoplasmic segment spans residues 1-50; it reads MPVKKYLLKCLHRLQKGPGYTYKELLVWYCNNTNTHGPKRIICEGPKKKA. Residues 51 to 71 form a helical membrane-spanning segment; the sequence is MWFLLTLLFACLVCWQWGVFI. Residues 72-530 lie on the Extracellular side of the membrane; that stretch reads QTYLSWEVSV…GGQFGFWMGG (459 aa). 9 disulfide bridges follow: cysteine 98/cysteine 270, cysteine 182/cysteine 187, cysteine 194/cysteine 201, cysteine 247/cysteine 254, cysteine 359/cysteine 446, cysteine 384/cysteine 442, cysteine 388/cysteine 438, cysteine 397/cysteine 424, and cysteine 399/cysteine 413. Residues asparagine 135 and asparagine 141 are each glycosylated (N-linked (GlcNAc...) asparagine). Asparagine 205 carries an N-linked (GlcNAc...) asparagine glycan. Residues 531–551 form a helical membrane-spanning segment; sequence SVLCLIEFGEIIIDFIWITII. Residues 552-638 lie on the Cytoplasmic side of the membrane; that stretch reads KLVASCKGLR…MESDSEVEAI (87 aa). Positions 594–620 are disordered; sequence SCRPHGEVYPDQQTLPIPGTPPPNYDS. The PY motif; recruits WW domain-containing proteins and is thereby required for ubiquitination and inhibition of the channel by NEDD4 and NEDD4L signature appears at 614 to 618; that stretch reads PPPNY. Serine 631 and serine 633 each carry phosphoserine.

Belongs to the amiloride-sensitive sodium channel (TC 1.A.6) family. SCNN1B subfamily. As to quaternary structure, component of the heterotrimeric epithelial sodium channel (ENaC) composed of an alpha/SCNN1A, a beta/SCNN1B and a gamma/SCNN1G subunit. Interacts with WWP1 (via WW domains). Interacts with WWP2 (via WW domains); inhibits the channel. Interacts with the full-length immature form of PCSK9 (pro-PCSK9). Interacts (N-glycosylated) with BPIFA1; the interaction is direct and inhibits the proteolytic processing of SCNN1A and SCNN1G and the activation of ENaC. In terms of processing, ubiquitinated. Can be ubiquitinated at multiple sites and undergo monoubiquitination and polyubiquitination. Ubiquitination by NEDD4 or NEDD4L inhibits the ENaC channel through endocytosis, intracellular retention and degradation of its individual subunits. However, some studies could not confirm the ubiquitination of this subunit of the ENaC. Post-translationally, N-glycosylated. N-glycosylation is required for interaction with BPIFA1. Phosphorylated on serine and threonine residues. Aldosterone and insulin increase the basal level of phosphorylation. As to expression, lung and kidney.

It localises to the apical cell membrane. It is found in the cytoplasmic vesicle membrane. It carries out the reaction Na(+)(in) = Na(+)(out). Its activity is regulated as follows. Originally identified and characterized by its inhibition by the diuretic drug amiloride. This is one of the three pore-forming subunits of the heterotrimeric epithelial sodium channel (ENaC), a critical regulator of sodium balance and fluid homeostasis. ENaC operates in epithelial tissues, where it mediates the electrodiffusion of sodium ions from extracellular fluid through the apical membrane of cells, with water following osmotically. It plays a key role in maintaining sodium homeostasis through electrogenic sodium reabsorption in the kidneys. This subunit is not essential for ENaC function in airway surface liquid homeostasis and proper mucus clearance. This chain is Epithelial sodium channel subunit beta, found in Mus musculus (Mouse).